Reading from the N-terminus, the 242-residue chain is UPF0246 protein SPH_1662 (242 aa).

Belongs to the UPF0246 family.

The chain is UPF0246 protein SPH_1662 from Streptococcus pneumoniae (strain Hungary19A-6).